We begin with the raw amino-acid sequence, 418 residues long: UPF0261 protein BRA1168/BS1330_II1159 (418 aa).

Belongs to the UPF0261 family.

This is UPF0261 protein BRA1168/BS1330_II1159 from Brucella suis biovar 1 (strain 1330).